Consider the following 339-residue polypeptide: Retroviral-like aspartic protease 1 (339 aa).

Residues 1–188 (MRNPGGPGWA…SEPEEILFAN (188 aa)) constitute a propeptide that is removed on maturation. The disordered stretch occupies residues 34 to 53 (VPAPFNSSRQGKNTAQPTEP). The span at 38-53 (FNSSRQGKNTAQPTEP) shows a compositional bias: polar residues. N39 is a glycosylation site (N-linked (GlcNAc...) asparagine). A helical transmembrane segment spans residues 55 to 75 (LSSVIAPTLFCAFLYLACVTA). The 82-residue stretch at 205–286 (VRFLVDSGAQ…AEEAIIGTDV (82 aa)) folds into the Peptidase A2 domain. D210 is a catalytic residue. N-linked (GlcNAc...) asparagine glycosylation is present at N274. Residues 325–339 (LIEEEEGSSAPEGSH) constitute a propeptide that is removed on maturation.

In terms of assembly, homodimer. Undergoes autocleavage which is necessary for activation of the protein. As to expression, highly expressed in stratified epithelia in skin, tongue, esophagus, forestomach and vagina. Also expressed in trachea, urinary bladder and thymus. Undetectable in simple epithelia. Within the epidermis, expressed exclusively in the granular layer (at protein level). Levels are elevated in benign skin tumors but are down-regulated in squamous cell carcinomas.

Its subcellular location is the membrane. Protease responsible for filaggrin processing, essential for the maintenance of a proper epidermis organization. In Mus musculus (Mouse), this protein is Retroviral-like aspartic protease 1.